A 61-amino-acid polypeptide reads, in one-letter code: uncharacterized protein (61 aa).

Residues 1–40 (MRRGGEPQCDGREFRIASSPAREREDDNETAPPQTSAAQE) are disordered. Residues 9-25 (CDGREFRIASSPARERE) show a composition bias toward basic and acidic residues.

This is an uncharacterized protein from Caenorhabditis elegans.